Here is a 124-residue protein sequence, read N- to C-terminus: Aspartate 1-decarboxylase (124 aa).

Ser21 acts as the Schiff-base intermediate with substrate; via pyruvic acid in catalysis. Residue Ser21 is modified to Pyruvic acid (Ser). Thr53 is a substrate binding site. The active-site Proton donor is Tyr54. Residue 69–71 (GAA) participates in substrate binding.

This sequence belongs to the PanD family. In terms of assembly, heterooctamer of four alpha and four beta subunits. Requires pyruvate as cofactor. Post-translationally, is synthesized initially as an inactive proenzyme, which is activated by self-cleavage at a specific serine bond to produce a beta-subunit with a hydroxyl group at its C-terminus and an alpha-subunit with a pyruvoyl group at its N-terminus.

It localises to the cytoplasm. The enzyme catalyses L-aspartate + H(+) = beta-alanine + CO2. It participates in cofactor biosynthesis; (R)-pantothenate biosynthesis; beta-alanine from L-aspartate: step 1/1. Its function is as follows. Catalyzes the pyruvoyl-dependent decarboxylation of aspartate to produce beta-alanine. The sequence is that of Aspartate 1-decarboxylase from Dehalococcoides mccartyi (strain ATCC BAA-2266 / KCTC 15142 / 195) (Dehalococcoides ethenogenes (strain 195)).